The primary structure comprises 359 residues: Fructose-bisphosphate aldolase 1 (359 aa).

Ser50 is a binding site for D-glyceraldehyde 3-phosphate. The active-site Proton donor is Asp83. His84, Asp105, Glu142, and His198 together coordinate Zn(2+). Residue Gly199 participates in dihydroxyacetone phosphate binding. His232 is a Zn(2+) binding site. Dihydroxyacetone phosphate-binding positions include 233–235 (GSS) and 275–278 (NIDT).

The protein belongs to the class II fructose-bisphosphate aldolase family. Homodimer. Requires Zn(2+) as cofactor.

It carries out the reaction beta-D-fructose 1,6-bisphosphate = D-glyceraldehyde 3-phosphate + dihydroxyacetone phosphate. It functions in the pathway carbohydrate biosynthesis; Calvin cycle. Its pathway is carbohydrate degradation; glycolysis; D-glyceraldehyde 3-phosphate and glycerone phosphate from D-glucose: step 4/4. In terms of biological role, catalyzes the aldol condensation of dihydroxyacetone phosphate (DHAP or glycerone-phosphate) with glyceraldehyde 3-phosphate (G3P) to form fructose 1,6-bisphosphate (FBP) in gluconeogenesis and the reverse reaction in glycolysis. The sequence is that of Fructose-bisphosphate aldolase 1 (cfxA) from Cereibacter sphaeroides (Rhodobacter sphaeroides).